The following is a 369-amino-acid chain: Phenylalanine--tRNA ligase alpha subunit (369 aa).

A Mg(2+)-binding site is contributed by Glu272.

This sequence belongs to the class-II aminoacyl-tRNA synthetase family. Phe-tRNA synthetase alpha subunit type 1 subfamily. As to quaternary structure, tetramer of two alpha and two beta subunits. Mg(2+) is required as a cofactor.

The protein localises to the cytoplasm. It catalyses the reaction tRNA(Phe) + L-phenylalanine + ATP = L-phenylalanyl-tRNA(Phe) + AMP + diphosphate + H(+). The protein is Phenylalanine--tRNA ligase alpha subunit of Cutibacterium acnes (strain DSM 16379 / KPA171202) (Propionibacterium acnes).